The chain runs to 506 residues: Tabersonine 16-hydroxylase 1 (506 aa).

The helical transmembrane segment at 1 to 21 threads the bilayer; the sequence is MEFYYFLYLAFLLFCFILSKT. Cys447 serves as a coordination point for heme.

The protein belongs to the cytochrome P450 family. Heme is required as a cofactor. In terms of tissue distribution, predominantly expressed in young leaves of mature plants. Low expression in roots and flowers, but not detected in stems and old leaves. Found predominantly in leaf epidermis. Barely detected in roots, internodes, young and mature leaves, and flower buds, but relatively abundant in fully developed flowers. Not detected in leaf epidermal cells.

Its subcellular location is the endoplasmic reticulum membrane. It catalyses the reaction (-)-tabersonine + reduced [NADPH--hemoprotein reductase] + O2 = 16-hydroxytabersonine + oxidized [NADPH--hemoprotein reductase] + H2O + H(+). Its pathway is alkaloid biosynthesis; vindoline biosynthesis. In terms of biological role, involved in the flower biosynthesis of vindoline, a precursor of vinblastine and vincristine. Hydroxylates specifically tabersonine, 2,3-dihydrotabersonine and 2,3-dihydro-3-hydroxytabersonine, but has no activity with naringenin, tryptamine, secologanin, strictosidine, ajmalicine, vindoline and catharanthine. This chain is Tabersonine 16-hydroxylase 1, found in Catharanthus roseus (Madagascar periwinkle).